A 481-amino-acid polypeptide reads, in one-letter code: Phosphatidylinositol 4-kinase type 2-beta (481 aa).

Residues 1-11 show a composition bias toward basic and acidic residues; sequence MEDPSEPDRLA. The disordered stretch occupies residues 1–82; that stretch reads MEDPSEPDRL…VSRSSSAELD (82 aa). Phosphoserine is present on residues Ser12, Ser17, and Ser45. Residues 53–64 are compositionally biased toward acidic residues; the sequence is AGEEGEAGDEEL. One can recognise a PI3K/PI4K catalytic domain in the interval 120–451; sequence GIFPERISQG…VQIPCVIVER (332 aa). A G-loop region spans residues 126 to 132; the sequence is ISQGSSG. Ser133 and Lys148 together coordinate ATP. An important for substrate binding region spans residues 153-155; that stretch reads EPY. The interval 161–174 is important for interaction with membranes; sequence KWTKYVHKVCCPCC. ATP contacts are provided by residues 257-260 and 271-272; these read QLFV and RK. The interval 264-272 is important for interaction with membranes; that stretch reads KEAEYWLRK. The segment at 301-309 is catalytic loop; it reads RNTDRGNDN. The activation loop stretch occupies residues 342 to 362; it reads AIDNGLAFPFKHPDEWRAYPF. Residue Asp344 participates in ATP binding. Residues 357-366 form an important for interaction with membranes region; that stretch reads WRAYPFHWAW.

Belongs to the PI3/PI4-kinase family. Type II PI4K subfamily. Widely expressed.

It is found in the cytoplasm. Its subcellular location is the cytosol. The protein resides in the golgi apparatus membrane. It localises to the endoplasmic reticulum membrane. The protein localises to the cell membrane. It is found in the early endosome membrane. It carries out the reaction a 1,2-diacyl-sn-glycero-3-phospho-(1D-myo-inositol) + ATP = a 1,2-diacyl-sn-glycero-3-phospho-(1D-myo-inositol 4-phosphate) + ADP + H(+). Inhibited by phenylarsine oxide and adenosine. Activation through membrane association is stimulated by active RAC1. Functionally, together with PI4K2A and the type III PI4Ks (PIK4CA and PIK4CB) it contributes to the overall PI4-kinase activity of the cell. This contribution may be especially significant in plasma membrane, endosomal and Golgi compartments. The phosphorylation of phosphatidylinositol (PI) to PI4P is the first committed step in the generation of phosphatidylinositol 4,5-bisphosphate (PIP2), a precursor of the second messenger inositol 1,4,5-trisphosphate (InsP3). Contributes to the production of InsP3 in stimulated cells and is likely to be involved in the regulation of vesicular trafficking. This Homo sapiens (Human) protein is Phosphatidylinositol 4-kinase type 2-beta (PI4K2B).